A 257-amino-acid polypeptide reads, in one-letter code: Diphthine synthase (257 aa).

Residues Leu-9, Asp-86, Val-89, 114–115, Leu-166, Ala-207, and His-232 each bind S-adenosyl-L-methionine; that span reads SI.

Belongs to the diphthine synthase family. Homodimer.

The enzyme catalyses 2-[(3S)-amino-3-carboxypropyl]-L-histidyl-[translation elongation factor 2] + 3 S-adenosyl-L-methionine = diphthine-[translation elongation factor 2] + 3 S-adenosyl-L-homocysteine + 3 H(+). The protein operates within protein modification; peptidyl-diphthamide biosynthesis. Functionally, S-adenosyl-L-methionine-dependent methyltransferase that catalyzes the trimethylation of the amino group of the modified target histidine residue in translation elongation factor 2 (EF-2), to form an intermediate called diphthine. The three successive methylation reactions represent the second step of diphthamide biosynthesis. The sequence is that of Diphthine synthase from Methanocella arvoryzae (strain DSM 22066 / NBRC 105507 / MRE50).